A 288-amino-acid polypeptide reads, in one-letter code: Phosphatidylserine decarboxylase proenzyme (288 aa).

Active-site charge relay system; for autoendoproteolytic cleavage activity residues include Asp101, His158, and Ser262. The Schiff-base intermediate with substrate; via pyruvic acid; for decarboxylase activity role is filled by Ser262. Ser262 carries the post-translational modification Pyruvic acid (Ser); by autocatalysis.

It belongs to the phosphatidylserine decarboxylase family. PSD-B subfamily. Prokaryotic type I sub-subfamily. In terms of assembly, heterodimer of a large membrane-associated beta subunit and a small pyruvoyl-containing alpha subunit. Requires pyruvate as cofactor. In terms of processing, is synthesized initially as an inactive proenzyme. Formation of the active enzyme involves a self-maturation process in which the active site pyruvoyl group is generated from an internal serine residue via an autocatalytic post-translational modification. Two non-identical subunits are generated from the proenzyme in this reaction, and the pyruvate is formed at the N-terminus of the alpha chain, which is derived from the carboxyl end of the proenzyme. The autoendoproteolytic cleavage occurs by a canonical serine protease mechanism, in which the side chain hydroxyl group of the serine supplies its oxygen atom to form the C-terminus of the beta chain, while the remainder of the serine residue undergoes an oxidative deamination to produce ammonia and the pyruvoyl prosthetic group on the alpha chain. During this reaction, the Ser that is part of the protease active site of the proenzyme becomes the pyruvoyl prosthetic group, which constitutes an essential element of the active site of the mature decarboxylase.

Its subcellular location is the cell membrane. It catalyses the reaction a 1,2-diacyl-sn-glycero-3-phospho-L-serine + H(+) = a 1,2-diacyl-sn-glycero-3-phosphoethanolamine + CO2. Its pathway is phospholipid metabolism; phosphatidylethanolamine biosynthesis; phosphatidylethanolamine from CDP-diacylglycerol: step 2/2. Catalyzes the formation of phosphatidylethanolamine (PtdEtn) from phosphatidylserine (PtdSer). This chain is Phosphatidylserine decarboxylase proenzyme, found in Alkalilimnicola ehrlichii (strain ATCC BAA-1101 / DSM 17681 / MLHE-1).